Reading from the N-terminus, the 457-residue chain is Siroheme synthase (457 aa).

The precorrin-2 dehydrogenase /sirohydrochlorin ferrochelatase stretch occupies residues 1–204 (MDHLPIFCQL…ADEKAVNATT (204 aa)). Residues 22–23 (DV) and 43–44 (LT) contribute to the NAD(+) site. Ser128 is subject to Phosphoserine. The tract at residues 216–457 (GEVVLVGAGP…RDKLNWFSNH (242 aa)) is uroporphyrinogen-III C-methyltransferase. Pro225 serves as a coordination point for S-adenosyl-L-methionine. Asp248 serves as the catalytic Proton acceptor. Lys270 functions as the Proton donor in the catalytic mechanism. Residues 301-303 (GGD), Ile306, 331-332 (TA), Met382, and Gly411 each bind S-adenosyl-L-methionine.

The protein in the N-terminal section; belongs to the precorrin-2 dehydrogenase / sirohydrochlorin ferrochelatase family. In the C-terminal section; belongs to the precorrin methyltransferase family.

The enzyme catalyses uroporphyrinogen III + 2 S-adenosyl-L-methionine = precorrin-2 + 2 S-adenosyl-L-homocysteine + H(+). It carries out the reaction precorrin-2 + NAD(+) = sirohydrochlorin + NADH + 2 H(+). The catalysed reaction is siroheme + 2 H(+) = sirohydrochlorin + Fe(2+). Its pathway is cofactor biosynthesis; adenosylcobalamin biosynthesis; precorrin-2 from uroporphyrinogen III: step 1/1. The protein operates within cofactor biosynthesis; adenosylcobalamin biosynthesis; sirohydrochlorin from precorrin-2: step 1/1. It participates in porphyrin-containing compound metabolism; siroheme biosynthesis; precorrin-2 from uroporphyrinogen III: step 1/1. It functions in the pathway porphyrin-containing compound metabolism; siroheme biosynthesis; siroheme from sirohydrochlorin: step 1/1. Its pathway is porphyrin-containing compound metabolism; siroheme biosynthesis; sirohydrochlorin from precorrin-2: step 1/1. Multifunctional enzyme that catalyzes the SAM-dependent methylations of uroporphyrinogen III at position C-2 and C-7 to form precorrin-2 via precorrin-1. Then it catalyzes the NAD-dependent ring dehydrogenation of precorrin-2 to yield sirohydrochlorin. Finally, it catalyzes the ferrochelation of sirohydrochlorin to yield siroheme. The polypeptide is Siroheme synthase (Salmonella typhi).